Here is a 609-residue protein sequence, read N- to C-terminus: MDFLRQCTLIQVMILAITIRLTHGGWTNFPESCVQLQPENAYDEMCDDSSLTNSNSIEYHNKLKSTKKFCILNQIKSVKTNLYRCYNISITSVCNSELSSQNLHQDYEVNPISRRDCLKHIIKNWNDENLERSLIQKSEDIYRTRCNFLKNTETKIEDYIIYQEKTESSVINADGLDSMIETKLIELESNKKLDNTVKTCISWEQGGDSRFNTLNLIALDLNLCLAKNSYKLEKCLLCYFFIGQDKWYRGEDGFMISIELSELDTKSIPKCEILWYRLYPGNLLTINQDYLAKKVQERNRGCNAVKSILRSGKAPPLENMIKYTIPLQAGYGIGFREKIEKTVYSAPLRGNLVERRNYDFFRCHYFPSKIKIVENKTHTPPINLCVYHFGKGSCHYPDNKYFISMNPVSFEENQHYPKSGQSFDYQSGLNGIRKKIKNQEYYIPDSFLMTLIYSSHTKSILEKTNITEVFRNDSNYENHTLQDYLGLFNKEDEGMRPERDLINLPNITSETEDDDTSDLNLELNKNLINKTSSGFSNDNSNVINIPSKEYNKTDIKTVGKINKTSIIINHEEKDYWHEEYNMWGLSGLSFLLLLALFYNKIKRKIKRKS.

An N-terminal signal peptide occupies residues 1 to 24; sequence MDFLRQCTLIQVMILAITIRLTHG. Residues 25 to 581 lie on the Extracellular side of the membrane; sequence GWTNFPESCV…EKDYWHEEYN (557 aa). N-linked (GlcNAc...) asparagine; by host glycosylation is found at N87, N375, N465, N472, N478, N506, N529, N551, and N562. The helical transmembrane segment at 582–599 threads the bilayer; sequence MWGLSGLSFLLLLALFYN. Topologically, residues 600 to 609 are cytoplasmic; sequence KIKRKIKRKS.

This sequence belongs to the ephemerovirus glycoprotein family.

It is found in the membrane. This chain is Non-structural glycoprotein (GNS), found in Adelaide River virus (ARV).